A 473-amino-acid polypeptide reads, in one-letter code: Photosystem II CP43 reaction center protein (473 aa).

Residues 1–14 (MKTLYSLRRFYHVE) constitute a propeptide that is removed on maturation. At T15 the chain carries N-acetylthreonine. T15 carries the phosphothreonine modification. Helical transmembrane passes span 69-93 (LFEVAHYIPEKPLYEQGLILLPHLA), 134-155 (LIGPDTLEESFPAFGYDWRDKN), 178-200 (KAIYVGGLYDTWAPGGGDVRIID), 255-275 (KPFAWARRAYVWSGEAYLSYS), and 291-312 (WYNNTVYPSEFYGPTGPEASQS). E367 is a binding site for [CaMn4O5] cluster. A helical transmembrane segment spans residues 447–471 (RARAAAAGFEKGINRENEPVLTLRP).

Belongs to the PsbB/PsbC family. PsbC subfamily. In terms of assembly, PSII is composed of 1 copy each of membrane proteins PsbA, PsbB, PsbC, PsbD, PsbE, PsbF, PsbH, PsbI, PsbJ, PsbK, PsbL, PsbM, PsbT, PsbX, PsbY, PsbZ, Psb30/Ycf12, at least 3 peripheral proteins of the oxygen-evolving complex and a large number of cofactors. It forms dimeric complexes. Requires Binds multiple chlorophylls and provides some of the ligands for the Ca-4Mn-5O cluster of the oxygen-evolving complex. It may also provide a ligand for a Cl- that is required for oxygen evolution. PSII binds additional chlorophylls, carotenoids and specific lipids. as cofactor.

It is found in the plastid. The protein localises to the chloroplast thylakoid membrane. In terms of biological role, one of the components of the core complex of photosystem II (PSII). It binds chlorophyll and helps catalyze the primary light-induced photochemical processes of PSII. PSII is a light-driven water:plastoquinone oxidoreductase, using light energy to abstract electrons from H(2)O, generating O(2) and a proton gradient subsequently used for ATP formation. The sequence is that of Photosystem II CP43 reaction center protein from Guillardia theta (Cryptophyte).